Reading from the N-terminus, the 262-residue chain is MWFSWNNTEQSIAVRQGYQVLAEYQLIEQEQLKNIYAIPSYASALHWFGVIFIHSGFYAGSMFRFSIILPDNFPNGTSLPTIIFTTTCYHPHIRPQTQSLDLAPFFTGWRKDHYHVWHLLKYIQAIFADPEGSISTTVTPSGDRVCLEEAYNMDALAMLSNDRVAFIKKVQELALFTKKHMYDKPTSNDPHYIVIEPFCSERHTKIMEQLKSPSWKEATSMDTSPPAQCLARIDSSRQMDEEEAKQSAKLFAKNGKAAAALQ.

A UBC core domain is found at 15–179 (RQGYQVLAEY…VQELALFTKK (165 aa)).

This sequence belongs to the ubiquitin-conjugating enzyme family. FTS subfamily.

This Drosophila pseudoobscura pseudoobscura (Fruit fly) protein is Protein crossbronx-like.